We begin with the raw amino-acid sequence, 436 residues long: Trigger factor (436 aa).

The region spanning Gly-163 to Pro-248 is the PPIase FKBP-type domain.

The protein belongs to the FKBP-type PPIase family. Tig subfamily.

The protein resides in the cytoplasm. It carries out the reaction [protein]-peptidylproline (omega=180) = [protein]-peptidylproline (omega=0). Functionally, involved in protein export. Acts as a chaperone by maintaining the newly synthesized protein in an open conformation. Functions as a peptidyl-prolyl cis-trans isomerase. This Bordetella pertussis (strain Tohama I / ATCC BAA-589 / NCTC 13251) protein is Trigger factor.